Here is a 71-residue protein sequence, read N- to C-terminus: UPF0346 protein SMU_1621c (71 aa).

This sequence belongs to the UPF0346 family.

This chain is UPF0346 protein SMU_1621c, found in Streptococcus mutans serotype c (strain ATCC 700610 / UA159).